The sequence spans 339 residues: Glycerol-3-phosphate dehydrogenase [NAD(P)+] (339 aa).

4 residues coordinate NADPH: Ser14, Tyr15, His35, and Lys109. The sn-glycerol 3-phosphate site is built by Lys109, Gly138, and Thr140. Ala142 contributes to the NADPH binding site. Sn-glycerol 3-phosphate contacts are provided by Lys194, Asp247, Ser257, Arg258, and Asn259. Lys194 acts as the Proton acceptor in catalysis. Arg258 contributes to the NADPH binding site. The NADPH site is built by Val282 and Glu284.

This sequence belongs to the NAD-dependent glycerol-3-phosphate dehydrogenase family.

It is found in the cytoplasm. The enzyme catalyses sn-glycerol 3-phosphate + NAD(+) = dihydroxyacetone phosphate + NADH + H(+). The catalysed reaction is sn-glycerol 3-phosphate + NADP(+) = dihydroxyacetone phosphate + NADPH + H(+). It participates in membrane lipid metabolism; glycerophospholipid metabolism. Catalyzes the reduction of the glycolytic intermediate dihydroxyacetone phosphate (DHAP) to sn-glycerol 3-phosphate (G3P), the key precursor for phospholipid synthesis. This is Glycerol-3-phosphate dehydrogenase [NAD(P)+] from Shewanella pealeana (strain ATCC 700345 / ANG-SQ1).